The primary structure comprises 271 residues: Phycocyanobilin lyase subunit alpha (271 aa).

Belongs to the CpcE/RpcE/PecE family. In terms of assembly, cpcE and CpcF associate to form a lyase.

Required for the chromophorylation of the cpcA1 gene product. This is Phycocyanobilin lyase subunit alpha (cpcE1) from Pseudanabaena tenuis (strain PCC 7409).